Reading from the N-terminus, the 77-residue chain is Conotoxin ArMSGL-0141 (77 aa).

The first 18 residues, 1–18 (MSGLGILVLTLLLLVYMA), serve as a signal peptide directing secretion. Positions 19 to 44 (TSHQDAGEKQATQRDAINVRRRRSLT) are excised as a propeptide. 3 disulfides stabilise this stretch: Cys-51-Cys-63, Cys-55-Cys-71, and Cys-62-Cys-75. Phenylalanine amide is present on Phe-76.

It belongs to the conotoxin O3 superfamily. Expressed by the venom duct.

The protein localises to the secreted. The sequence is that of Conotoxin ArMSGL-0141 from Conus arenatus (Sand-dusted cone).